The sequence spans 186 residues: Orotate phosphoribosyltransferase (186 aa).

5-phospho-alpha-D-ribose 1-diphosphate-binding positions include R96, K100, H102, and 121-129 (DDVATTGTS). Orotate-binding residues include T125 and R153.

The protein belongs to the purine/pyrimidine phosphoribosyltransferase family. PyrE subfamily. As to quaternary structure, homodimer. The cofactor is Mg(2+).

It carries out the reaction orotidine 5'-phosphate + diphosphate = orotate + 5-phospho-alpha-D-ribose 1-diphosphate. The protein operates within pyrimidine metabolism; UMP biosynthesis via de novo pathway; UMP from orotate: step 1/2. Catalyzes the transfer of a ribosyl phosphate group from 5-phosphoribose 1-diphosphate to orotate, leading to the formation of orotidine monophosphate (OMP). The chain is Orotate phosphoribosyltransferase from Aeropyrum pernix (strain ATCC 700893 / DSM 11879 / JCM 9820 / NBRC 100138 / K1).